Consider the following 235-residue polypeptide: MDLLFGSTNPGKLRELRRLVAGLPLRVVSPDDLGRPLPVVVEDGATFQANAEKKAVAWARWSGLHAVADDSGLCVDALGGAPGVHSARWSDLEPEGPASPVCELAGVAELELGPVAGRAARDERNNDKLLAALSGLPDPRRGARYEAVLALARPDGTLVGTVTGTCPGRIGHARRGDGGFGYDPLFVPAAELAAGEGARVRTMAELSSDEKDALSHRGEAFRKLLPMLAALARGA.

A substrate-binding site is contributed by 7-12 (STNPGK). Aspartate 70 functions as the Proton acceptor in the catalytic mechanism. A Mg(2+)-binding site is contributed by aspartate 70. Residues serine 71, 180–183 (FGYD), lysine 211, and 216–217 (HR) each bind substrate.

It belongs to the HAM1 NTPase family. Homodimer. The cofactor is Mg(2+).

The catalysed reaction is XTP + H2O = XMP + diphosphate + H(+). It catalyses the reaction dITP + H2O = dIMP + diphosphate + H(+). The enzyme catalyses ITP + H2O = IMP + diphosphate + H(+). Functionally, pyrophosphatase that catalyzes the hydrolysis of nucleoside triphosphates to their monophosphate derivatives, with a high preference for the non-canonical purine nucleotides XTP (xanthosine triphosphate), dITP (deoxyinosine triphosphate) and ITP. Seems to function as a house-cleaning enzyme that removes non-canonical purine nucleotides from the nucleotide pool, thus preventing their incorporation into DNA/RNA and avoiding chromosomal lesions. The protein is dITP/XTP pyrophosphatase of Anaeromyxobacter dehalogenans (strain 2CP-C).